Consider the following 371-residue polypeptide: MKLSAFDFNLPSELIAQSPSSERDNSDLLIAAMPPIKTKFYNIIDYLKEGDLLVLNNSKVIKAKLHLWKNVTINLNQKLSDDSWSAFAKPTRKLHVNDEFYFDNHKVIITEKLVMGEIKVKFDLDNISVFEFLDKYGEMPLPVYIRRSHSLYHTTSTLCHTRENGYSEKLDAFFRRNDIKDKDNDIVYDNERYQTIYSQIEGSVAAPTAGLHFTNDILDKLKTKGIHTAFLTLHVGAGTFLPVKTENIHEHKMHTEYCSITPETAEIINKAKQERRRIIAVGTTTLRTVESFCNNGIIKAGSFETDIFITPGFKFQTADMLLTNFHFPKSTLFMLICAFAGFKEMHELYKYAIKEKMRFFSYGDATLLYRK.

Belongs to the QueA family. In terms of assembly, monomer.

Its subcellular location is the cytoplasm. It carries out the reaction 7-aminomethyl-7-carbaguanosine(34) in tRNA + S-adenosyl-L-methionine = epoxyqueuosine(34) in tRNA + adenine + L-methionine + 2 H(+). It participates in tRNA modification; tRNA-queuosine biosynthesis. Functionally, transfers and isomerizes the ribose moiety from AdoMet to the 7-aminomethyl group of 7-deazaguanine (preQ1-tRNA) to give epoxyqueuosine (oQ-tRNA). The chain is S-adenosylmethionine:tRNA ribosyltransferase-isomerase from Rickettsia akari (strain Hartford).